The following is a 782-amino-acid chain: Probable methionine--tRNA ligase, cytoplasmic (782 aa).

The short motif at 231–241 (PYVNNVPHLGN) is the 'HIGH' region element. Residues 551 to 555 (KFSKS) carry the 'KMSKS' region motif.

This sequence belongs to the class-I aminoacyl-tRNA synthetase family.

It is found in the cytoplasm. The catalysed reaction is tRNA(Met) + L-methionine + ATP = L-methionyl-tRNA(Met) + AMP + diphosphate. This chain is Probable methionine--tRNA ligase, cytoplasmic (rar1), found in Schizosaccharomyces pombe (strain 972 / ATCC 24843) (Fission yeast).